The chain runs to 933 residues: Progesterone receptor (933 aa).

The AF3; mediates transcriptional activation stretch occupies residues 1–164 (MTELKAKGPR…PATQGVLSPL (164 aa)). The tract at residues 1–256 (MTELKAKGPR…AAAGGGAAAV (256 aa)) is disordered. The segment at 1–566 (MTELKAKGPR…YSFESLPQKI (566 aa)) is modulating, Pro-Rich. A Phosphoserine modification is found at S20. An LXXL motif 1 motif is present at residues 55–59 (LDGLL). S81 carries the phosphoserine modification. Residues 115–119 (LDTLL) carry the LXXL motif 2 motif. Phosphoserine is present on residues S130 and S162. A mediates transcriptional transrepression region spans residues 165 to 305 (MSRSGCKAGD…LATTMMDFIH (141 aa)). The Nuclear localization signal signature appears at 183–187 (KVLPR). Phosphoserine occurs at positions 190 and 213. A compositionally biased stretch (acidic residues) spans 220 to 231 (EVEEEDGSESEE). The segment covering 232–246 (SAGPLLKGKPRALGG) has biased composition (low complexity). Phosphoserine; by MAPK1 is present on S294. The span at 335–356 (AXSAFAPPRSSPSASSTPVAVG) shows a compositional bias: low complexity. Positions 335-378 (AXSAFAPPRSSPSASSTPVAVGDFPDCAYPPDAEPKDDAYPLYS) are disordered. S345 carries the post-translational modification Phosphoserine; by MAPK. K388 participates in a covalent cross-link: Glycyl lysine isopeptide (Lys-Gly) (interchain with G-Cter in SUMO); alternate. K388 participates in a covalent cross-link: Glycyl lysine isopeptide (Lys-Gly) (interchain with G-Cter in ubiquitin); alternate. S400 is subject to Phosphoserine; by CDK2. The segment at 415 to 452 (PDFPLGPPPPLPPRAPPSRPGEAAVTAAPASASVSSAS) is disordered. Over residues 418–433 (PLGPPPPLPPRAPPSR) the composition is skewed to pro residues. A compositionally biased stretch (low complexity) spans 434–452 (PGEAAVTAAPASASVSSAS). Residues 456–546 (STLECILYKA…VYPPYLNYLR (91 aa)) are AF1; mediates transcriptional activation. A Glycyl lysine isopeptide (Lys-Gly) (interchain with G-Cter in SUMO) cross-link involves residue K531. 2 NR C4-type zinc fingers span residues 567–587 (CLIC…CGSC) and 603–627 (CAGR…LRKC). The segment at residues 567–639 (CLICGDEASG…AGMVLGGRKF (73 aa)) is a DNA-binding region (nuclear receptor). At S676 the chain carries Phosphoserine. The 235-residue stretch at 679-913 (QDIQLIPPLI…EFPEMMSEVI (235 aa)) folds into the NR LBD domain. The AF2; mediates transcriptional activation stretch occupies residues 687-933 (LINLLMSIEP…MVKPLLFHKK (247 aa)). R766 is a progesterone binding site.

The protein belongs to the nuclear hormone receptor family. Interacts with SMARD1 and UNC45A. Interacts with CUEDC2; the interaction promotes ubiquitination, decreases sumoylation, and represses transcriptional activity. Interacts with PIAS3; the interaction promotes sumoylation of PR in a hormone-dependent manner, inhibits DNA-binding, and alters nuclear export. Interacts with SP1; the interaction requires ligand-induced phosphorylation on Ser-345 by ERK1/2-MAPK. Interacts with PRMT2. Interacts with NCOA2 and NCOA1. Interacts with KLF9. Interacts with GTF2B. Post-translationally, phosphorylated on multiple serine sites. Several of these sites are hormone-dependent. Phosphorylation on Ser-294 is highly hormone-dependent and modulates ubiquitination and sumoylation on Lys-388. Phosphorylation on Ser-102 and Ser-345 requires induction by hormone. Basal phosphorylation on Ser-81, Ser-162, Ser-190 and Ser-400 is increased in response to progesterone and can be phosphorylated in vitro by the CDK2-A1 complex. Increased levels of phosphorylation on Ser-400 also in the presence of EGF, heregulin, IGF, PMA and FBS. Phosphorylation at this site by CDK2 is ligand-independent, and increases nuclear translocation and transcriptional activity. Phosphorylation at Ser-162 and Ser-294, but not at Ser-190, is impaired during the G(2)/M phase of the cell cycle. Phosphorylation on Ser-345 by ERK1/2 MAPK is required for interaction with SP1. In terms of processing, sumoylation is hormone-dependent and represses transcriptional activity. Sumoylation on all three sites is enhanced by PIAS3. Desumoylated by SENP1. Sumoylation on Lys-388, the main site of sumoylation, is repressed by ubiquitination on the same site, and modulated by phosphorylation at Ser-294. Ubiquitination is hormone-dependent and represses sumoylation on the same site. Promoted by MAPK-mediated phosphorylation on Ser-294. Ubiquitinated by UBR5, leading to its degradation: UBR5 specifically recognizes and binds ligand-bound PGR when it is not associated with coactivators (NCOAs). In presence of NCOAs, the UBR5-degron is not accessible, preventing its ubiquitination and degradation. Post-translationally, palmitoylated by ZDHHC7 and ZDHHC21. Palmitoylation is required for plasma membrane targeting and for rapid intracellular signaling via ERK and AKT kinases and cAMP generation.

The protein resides in the nucleus. It is found in the cytoplasm. Functionally, the steroid hormones and their receptors are involved in the regulation of eukaryotic gene expression and affect cellular proliferation and differentiation in target tissues. Transcriptional activator of several progesteron-dependent promoters in a variety of cell types. Involved in activation of SRC-dependent MAPK signaling on hormone stimulation. This is Progesterone receptor (PGR) from Pan troglodytes (Chimpanzee).